A 288-amino-acid polypeptide reads, in one-letter code: NAD(P)H quinone oxidoreductase YCP4 (288 aa).

The region spanning 3-192 is the Flavodoxin-like domain; sequence IAIIQYSTYG…EIAEKQGEAF (190 aa). FMN contacts are provided by residues 9–13 and 110–164; these read STYGH and VFVS…SPYG. The segment at 202–288 is disordered; the sequence is GSKKTNTTTT…KSSCSKCIIM (87 aa). Over residues 205-254 the composition is skewed to low complexity; sequence KTNTTTTSKSAATSDAAGTTSGTAAGTSAATGAATGTSAPKESTKEASSS. A compositionally biased stretch (polar residues) spans 261 to 288; it reads NGTATRTQQSTKAPETAEKSSCSKCIIM.

It belongs to the WrbA family. FMN is required as a cofactor.

It is found in the cell membrane. It catalyses the reaction a quinone + NADH + H(+) = a quinol + NAD(+). It carries out the reaction a quinone + NADPH + H(+) = a quinol + NADP(+). Its function is as follows. Flavodoxin-like protein (FLP) that plays a role in cell wall integrity, oxidative stress protection and virulence. FLPs act as NAD(P)H quinone oxidoreductases. Reduces ubiquinone (coenzyme Q), enabling it to serve as an antioxidant in the membrane. In Candida albicans (strain SC5314 / ATCC MYA-2876) (Yeast), this protein is NAD(P)H quinone oxidoreductase YCP4.